The primary structure comprises 57 residues: Large ribosomal subunit protein bL32 (57 aa).

The disordered stretch occupies residues 1–23; the sequence is MAVPKKKTSKSKRDKRRATWRHK.

Belongs to the bacterial ribosomal protein bL32 family.

In Trichormus variabilis (strain ATCC 29413 / PCC 7937) (Anabaena variabilis), this protein is Large ribosomal subunit protein bL32.